Reading from the N-terminus, the 418-residue chain is rRNA methyltransferase 3, mitochondrial (418 aa).

The N-terminal 40 residues, 1–40, are a transit peptide targeting the mitochondrion; the sequence is MAAPAKGMWCSLGSLLRVVQTRDLNARRWVRALRRSPVRV. The tract at residues 41 to 90 is disordered; the sequence is LSPSGQVEERKRAPDQQPRKAVPKASSQGQRQKQPLETSPSQTPHTWEEA. Positions 47-58 are enriched in basic and acidic residues; the sequence is VEERKRAPDQQP. A compositionally biased stretch (polar residues) spans 65–85; it reads ASSQGQRQKQPLETSPSQTPH. The S-adenosyl-L-methionine site is built by Gly-354, Ile-378, and Leu-387.

The protein belongs to the class IV-like SAM-binding methyltransferase superfamily. RNA methyltransferase TrmH family.

The protein localises to the mitochondrion. It carries out the reaction guanosine(1370) in 16S rRNA + S-adenosyl-L-methionine = 2'-O-methylguanosine(1370) in 16S rRNA + S-adenosyl-L-homocysteine + H(+). S-adenosyl-L-methionine-dependent 2'-O-ribose methyltransferase that catalyzes the formation of 2'-O-methylguanosine at position 1370 (Gm1370) in the 16S mitochondrial large subunit ribosomal RNA (mtLSU rRNA), a conserved modification in the peptidyl transferase domain of the mtLSU rRNA. Also required for formation of 2'-O-methyluridine at position 1369 (Um1369) mediated by MRM2. The chain is rRNA methyltransferase 3, mitochondrial from Mus musculus (Mouse).